Here is a 351-residue protein sequence, read N- to C-terminus: Modulator of apoptosis 1 (351 aa).

Residues 49 to 52 (YRLL) carry the LIR motif. The tract at residues 120-127 (LTRALAHE) is BH3-like. The RASSF1-binding stretch occupies residues 202 to 205 (KRRR).

The protein belongs to the PNMA family. Homodimer. Under normal circumstances, held in an inactive conformation by an intramolecular interaction. Interacts with BAX. Binding to RASSF1 isoform A (RASSF1A) relieves this inhibitory interaction and allows further binding to BAX. Also binds to BCL2 and BCLX. Recruited to the TNFRSF1A and TNFRSF10A complexes in response to their respective cognate ligand, after internalization. Interacts with TRIM39. Interacts with RASSF6. Interacts with ATG8 proteins MAP1LC3A, MAP1LC3B and MAP1LC3C. Does not interact with ATG8 proteins GABARAPL1, GABARAPL2 and GABARAP. Interacts with SQSTM1; promoting dissociation of SQSTM1 inclusion bodies that sequester KEAP1. In terms of processing, ubiquitinated and degraded during mitotic exit by APC/C-Cdh1, this modification is inhibited by TRIM39.

It is found in the cytoplasm. The protein localises to the cytosol. Its subcellular location is the mitochondrion outer membrane. The protein resides in the extracellular vesicle membrane. Functionally, retrotransposon-derived protein that forms virion-like capsids. Acts as an effector of BAX during apoptosis: enriched at outer mitochondria membrane and associates with BAX upon induction of apoptosis, facilitating BAX-dependent mitochondrial outer membrane permeabilization and apoptosis. Required for death receptor-dependent apoptosis. When associated with RASSF1, promotes BAX conformational change and translocation to mitochondrial membranes in response to TNF and TNFSF10 stimulation. Also promotes autophagy: promotes phagophore closure via association with ATG8 proteins. Acts as an inhibitor of the NFE2L2/NRF2 pathway via interaction with SQSTM1: interaction promotes dissociation of SQSTM1 inclusion bodies that sequester KEAP1, relieving inactivation of the BCR(KEAP1) complex. This Macaca fascicularis (Crab-eating macaque) protein is Modulator of apoptosis 1.